An 89-amino-acid chain; its full sequence is Small ribosomal subunit protein uS15 (89 aa).

It belongs to the universal ribosomal protein uS15 family. In terms of assembly, part of the 30S ribosomal subunit. Forms a bridge to the 50S subunit in the 70S ribosome, contacting the 23S rRNA.

One of the primary rRNA binding proteins, it binds directly to 16S rRNA where it helps nucleate assembly of the platform of the 30S subunit by binding and bridging several RNA helices of the 16S rRNA. Its function is as follows. Forms an intersubunit bridge (bridge B4) with the 23S rRNA of the 50S subunit in the ribosome. The sequence is that of Small ribosomal subunit protein uS15 from Prochlorococcus marinus subsp. pastoris (strain CCMP1986 / NIES-2087 / MED4).